The chain runs to 164 residues: D-aminoacyl-tRNA deacylase (164 aa).

TRNA contacts are provided by Trp72 and Phe89. Thr90 (nucleophile) is an active-site residue. Residues 104–107 (HLAK) carry the C-terminal adenosine nucleotide of tRNA motif. The Gly-cisPro motif, allows the protein to recognize chirality of D-amino acids signature appears at 149–150 (GP).

Belongs to the DTD family. In terms of assembly, homodimer.

It is found in the cytoplasm. It carries out the reaction glycyl-tRNA(Ala) + H2O = tRNA(Ala) + glycine + H(+). The catalysed reaction is a D-aminoacyl-tRNA + H2O = a tRNA + a D-alpha-amino acid + H(+). The enzyme catalyses D-tyrosyl-tRNA(Tyr) + H2O = D-tyrosine + tRNA(Tyr). Functionally, D-aminoacyl-tRNA deacylase, with no observable activity on tRNAs charged with their cognate L-amino acid. Probably acts by rejecting L-amino acids from its binding site rather than specific recognition of D-amino acids. Catalyzes the hydrolysis of D-tyrosyl-tRNA(Tyr), has no activity on correctly charged L-tyrosyl-tRNA(Tyr). Hydrolyzes correctly charged, achiral, glycyl-tRNA(Gly). Deacylates mischarged D.melanogaster and E.coli glycyl-tRNA(Ala). Probably acts via tRNA-based rather than protein-based catalysis. Acts on tRNAs only when the D-amino acid is either attached to the ribose 3'-OH or transferred to the 3'-OH from the 2'-OH through rapid transesterification. Binds a number of other D-amino acids (D-Arg, D-Glu, D-His, D-Lys, D-Ser), suggesting it may also deacylate other mischarged tRNAs. This Plasmodium falciparum (isolate 3D7) protein is D-aminoacyl-tRNA deacylase.